The following is a 206-amino-acid chain: Probable thymidylate kinase (206 aa).

Position 7–14 (7–14 (GIDGSGKS)) interacts with ATP.

Belongs to the thymidylate kinase family.

It carries out the reaction dTMP + ATP = dTDP + ADP. The sequence is that of Probable thymidylate kinase from Methanospirillum hungatei JF-1 (strain ATCC 27890 / DSM 864 / NBRC 100397 / JF-1).